We begin with the raw amino-acid sequence, 117 residues long: Pterin-4-alpha-carbinolamine dehydratase 2 (117 aa).

Residues Lys-101, Lys-105, and Lys-112 each carry the N6-acetyllysine; alternate modification. N6-succinyllysine; alternate occurs at positions 101, 105, and 112.

Belongs to the pterin-4-alpha-carbinolamine dehydratase family. In terms of assembly, homotetramer. Interacts with DYRK1B.

It catalyses the reaction (4aS,6R)-4a-hydroxy-L-erythro-5,6,7,8-tetrahydrobiopterin = (6R)-L-erythro-6,7-dihydrobiopterin + H2O. Involved in tetrahydrobiopterin biosynthesis. Seems to both prevent the formation of 7-pterins and accelerate the formation of quinonoid-BH2. Its function is as follows. Regulates the dimerization of homeodomain protein HNF-1-alpha and enhances its transcriptional activity. The chain is Pterin-4-alpha-carbinolamine dehydratase 2 (PCBD2) from Pongo abelii (Sumatran orangutan).